Here is a 101-residue protein sequence, read N- to C-terminus: MAKKSLIVREYKKNILVNKYYKKRLLLKSQLNNTINSTDCILKILNKLQKLPKKSSPTKLRNRCTLTGRARGVYSEYKISRFVFRNLALNGLLPGVFKASW.

Belongs to the universal ribosomal protein uS14 family. Part of the 30S ribosomal subunit.

The protein localises to the plastid. In terms of biological role, binds 16S rRNA, required for the assembly of 30S particles. This chain is Small ribosomal subunit protein uS14c, found in Helicosporidium sp. subsp. Simulium jonesii (Green alga).